A 685-amino-acid chain; its full sequence is Stromal interaction molecule 1 (685 aa).

A signal peptide spans 1-22 (MDVCARLALWLLWGLLLHQGQS). At 23–213 (LSHSHSEKNT…LLTRHNHLKD (191 aa)) the chain is on the extracellular side. Residues 24–43 (SHSHSEKNTGASSGATSEES) are disordered. Positions 32 to 41 (TGASSGATSE) are enriched in low complexity. EF-hand domains follow at residues 64 to 97 (SFEAVRNIHKLMDDDANGDVDVEESDEFLREDLN) and 102 to 126 (TVKHSTFHGEDKLISVEDLWKAWKS). Residues D76, D78, N80, D82, and E87 each coordinate Ca(2+). 2 N-linked (GlcNAc...) asparagine glycosylation sites follow: N131 and N171. One can recognise an SAM domain in the interval 132–200 (WTVDEVIQWL…QLKALDTVLF (69 aa)). The helical transmembrane segment at 214–234 (FMLVVSIVIGVGGCWFAYIQN) threads the bilayer. Topologically, residues 235 to 685 (RYSKEHMKKM…LKIFKKPLKK (451 aa)) are cytoplasmic. Residues 248–442 (LEGLHRAEQS…IEILCGFQIV (195 aa)) are a coiled coil. The residue at position 257 (S257) is a Phosphoserine. The tract at residues 344 to 442 (PEALQKWLQL…IEILCGFQIV (99 aa)) is SOAR/CAD. Positions 475 to 483 (DDVDDMDEE) are contributes to fast Ca(2+)-dependent inactivation of CRAC channels. The segment covering 490-499 (MQSPSLQSSV) has biased composition (low complexity). Residues 490–541 (MQSPSLQSSVRQRLTEPQLGLGSQRDLTHSDSESSLHMSDRQRVAPKPPQMG) form a disordered region. T504 is subject to Phosphothreonine. At S512 the chain carries Phosphoserine. The span at 515 to 532 (DLTHSDSESSLHMSDRQR) shows a compositional bias: basic and acidic residues. Position 517 is a phosphothreonine (T517). Phosphoserine occurs at positions 519, 521, 523, 524, 567, 575, 602, 608, 618, 621, and 628. Residues 596-685 (LMELNPSVPP…LKIFKKPLKK (90 aa)) form a disordered region. A compositionally biased stretch (low complexity) spans 608 to 620 (SPLLDSSHSLSPS). The Microtubule tip localization signal motif lies at 642–645 (TRIP). Over residues 655–666 (EEDNGSIGEETD) the composition is skewed to acidic residues. The residue at position 660 (S660) is a Phosphoserine. The residue at position 665 (T665) is a Phosphothreonine. S668 carries the phosphoserine modification. Basic residues predominate over residues 670-685 (GRKKFPLKIFKKPLKK). A required for generation of inwardly rectifying CRAC currents region spans residues 672–685 (KKFPLKIFKKPLKK).

In terms of assembly, monomer in the presence of Ca(2+). It oligomerizes in absence of Ca(2+). Forms homooligomers and heterooligomers with STIM2. Interacts with pore-forming subunits of CRAC channels, ORAI1, ORAI2 and ORAI3; this interaction is potentiated upon Ca(2+) store depletion. Interacts (via the transmembrane region and the SOAR/CAD domain) with SPPL3; the interaction promotes the binding of STIM1 to ORAI1. Interacts with ORAI1. Interacts with MAPRE1; probably required for targeting to the growing microtubule plus ends. Interacts with CRACR2A/EFCAB4B; the interaction is direct and takes place in absence of Ca(2+). Forms a complex with CRACR2A/EFCAB4B and ORAI1 at low concentration of Ca(2+), the complex dissociates at elevated Ca(2+) concentrations. Interacts with SARAF, promoting a slow inactivation of STIM1-dependent SOCE activity, possibly by facilitating the deoligomerization of STIM1. Interacts with EFHB; the interaction takes place upon Ca(2+)-store depletion and inhibits the association with SARAF. Interacts with ASPH. Interacts with SLC35G1; intracellular Ca(2+)-dependent. May interact with ATP1A1, ATP2A2, ATP2B1, ATP2B4, KPNB1 and XPO1; through SLC35G1. Interacts with STIMATE, promoting STIM1 conformational switch. Interacts with TMEM178A. Interacts with CASQ1 (via C-terminal end and preferentially with the monomeric form); this interaction increases in response to a depletion of intracellular Ca(2+), decreases both STIM1 aggregation and clustering, interaction of STIM1 with ORAI1 and store-operated Ca(2+) entry (SOCE) activity. Interacts with ADCY8. Interacts with TMEM203. Glycosylation is required for cell surface expression. In terms of processing, phosphorylated predominantly on Ser residues. In terms of tissue distribution, expressed in maturation-stage ameloblasts (at protein level). Expressed in all tissues examined and in many cell types, including bone marrow stroma, fibroblast, B-cell precursors, lymphoma and erythroleukemia.

The protein resides in the cell membrane. It is found in the endoplasmic reticulum membrane. The protein localises to the sarcoplasmic reticulum. It localises to the cytoplasm. Its subcellular location is the cytoskeleton. Functionally, acts as a Ca(2+) sensor that gates two major inward rectifying Ca(2+) channels at the plasma membrane: Ca(2+) release-activated Ca(2+) (CRAC) channels and arachidonate-regulated Ca(2+)-selective (ARC) channels. Plays a role in mediating store-operated Ca(2+) entry (SOCE), a Ca(2+) influx following depletion of intracellular Ca(2+) stores. Upon Ca(2+) depletion, translocates from the endoplasmic reticulum to the plasma membrane where it activates CRAC channel pore-forming subunits ORA1, ORA2 and ORAI3 to generate sustained and oscillatory Ca(2+) entry. Involved in enamel formation. The chain is Stromal interaction molecule 1 (Stim1) from Mus musculus (Mouse).